The sequence spans 72 residues: Seed trypsin/chymotrypsin inhibitor IVB (72 aa).

7 disulfide bridges follow: cysteine 8–cysteine 61, cysteine 9–cysteine 24, cysteine 12–cysteine 57, cysteine 14–cysteine 22, cysteine 31–cysteine 38, cysteine 35–cysteine 50, and cysteine 40–cysteine 48.

Belongs to the Bowman-Birk serine protease inhibitor family. Seed.

In terms of biological role, inhibitor of trypsin and of chymotrypsin. May function as a natural phytochemical defense against predators. This Pisum sativum (Garden pea) protein is Seed trypsin/chymotrypsin inhibitor IVB.